The sequence spans 547 residues: Nitrate transporter 2.1 (547 aa).

12 helical membrane passes run 53-73 (WICFFMSFVATFAPASLAPII), 86-106 (NAGVAAVCGAIAARIFMGIVV), 113-133 (YGAAATMLMTAPAVFCMALVT), 143-163 (FFIGLSLCMFVCCQFWCGTMF), 173-193 (AIAAGWGNMGGGACHFIMPLI), 211-231 (AFFVPGGIYILTATLTLLLGI), 262-280 (LGNYRSWILALTYGYSFGV), 296-316 (FGLNLAVAGALGAIFGLMNLF), 338-358 (IWALWIIQTLGGIFCIVLGKV), 366-386 (IVIMIVFSIFCQQACGLHFGI), 400-420 (GLVGAGGNTGAAITQAIWFAG), and 433-453 (GFVYMGIMTIGLTLPLFFIWF).

This sequence belongs to the major facilitator superfamily. Nitrate/nitrite porter (TC 2.A.1.8) family.

The protein resides in the cell membrane. With respect to regulation, nitrite transport mediated by system 1 is very sensitive to inhibition by nitrate. Functionally, involved in nitrate transport, but does not seem to be able to mediate transport by its own. Acts as a dual component transporter with NAR2 (system 1). Imports nitrate with high affinity when expressed with NAR2 in a heterologous system (Xenopus oocytes). Involved in a high affinity and a high capacity transport specific for both nitrate and nitrite. The sequence is that of Nitrate transporter 2.1 from Chlamydomonas reinhardtii (Chlamydomonas smithii).